A 610-amino-acid chain; its full sequence is Glutamine--fructose-6-phosphate aminotransferase [isomerizing] (610 aa).

Residue Cys2 is the Nucleophile; for GATase activity of the active site. The Glutamine amidotransferase type-2 domain maps to 2 to 218; that stretch reads CGIVGAVAQR…EGDVAEITRR (217 aa). 2 consecutive SIS domains span residues 286-426 and 459-600; these read AVEI…QQNR and LAPD…VDQP. Lys605 acts as the For Fru-6P isomerization activity in catalysis.

Homodimer.

It is found in the cytoplasm. It catalyses the reaction D-fructose 6-phosphate + L-glutamine = D-glucosamine 6-phosphate + L-glutamate. Catalyzes the first step in hexosamine metabolism, converting fructose-6P into glucosamine-6P using glutamine as a nitrogen source. The chain is Glutamine--fructose-6-phosphate aminotransferase [isomerizing] from Aliivibrio fischeri (strain ATCC 700601 / ES114) (Vibrio fischeri).